Consider the following 149-residue polypeptide: Oligosaccharyltransferase complex subunit ostc (149 aa).

The Cytoplasmic portion of the chain corresponds to 1–32 (METLFSLPFTVLECPNVKLKKPSWLHMPSAMT). A helical transmembrane segment spans residues 33-53 (VYAVVIVSYFLITGGIIYDVI). The Extracellular portion of the chain corresponds to 54 to 83 (VEPPSVGSMTDEHGHQRPVAFLAYRVNGQY). Residues 84–104 (IMEGLASSFLFTMGGLGFIIL) form a helical membrane-spanning segment. Over 105-117 (DRSNAPNIPKLNR) the chain is Cytoplasmic. A helical transmembrane segment spans residues 118 to 138 (FLLLFIGFVSVLLSFFMARVF). The Extracellular portion of the chain corresponds to 139-149 (MRMKLPGYLMG).

It belongs to the OSTC family. Specific component of the STT3A-containing form of the oligosaccharyltransferase (OST) complex.

Its subcellular location is the membrane. The protein operates within protein modification; protein glycosylation. Functionally, specific component of the STT3A-containing form of the oligosaccharyl transferase (OST) complex that catalyzes the initial transfer of a defined glycan (Glc(3)Man(9)GlcNAc(2) in eukaryotes) from the lipid carrier dolichol-pyrophosphate to an asparagine residue within an Asn-X-Ser/Thr consensus motif in nascent polypeptide chains, the first step in protein N-glycosylation. N-glycosylation occurs cotranslationally and the complex associates with the Sec61 complex at the channel-forming translocon complex that mediates protein translocation across the endoplasmic reticulum (ER). All subunits are required for a maximal enzyme activity. In Danio rerio (Zebrafish), this protein is Oligosaccharyltransferase complex subunit ostc.